Here is a 418-residue protein sequence, read N- to C-terminus: MKFAIESISKNSGRLGQLRIKDGGPEFKTPLLLQTTKGGSIPWLSADVFETQVSRKPQVLQFTLSTMEQMTEALTHWNSGGGRGLSDYVGLPGHLNILLLRDPCETTPSGGNDRDILPLFTRRGKESLSAERYMEIVASFKPDMYEGLCDADTNLESAKKRVQKSVDRTEKFMHYIYEHRGKVNSTLLAPIVGGYNTFARTQSIKHAREQPAGSYGGYIFEGFHTNGLSATTLDTSELLPIVEHCVKQLEEDKPRILPGAYTPLTILELIQQGIDVFDTSYAYCASLNFKALTFSFVQDAVEHVPFLDITDEAIKEDFNPPLSNCNCLTCQKHTRAYLHHLYKTNELLGPILLMVHNLYHYMDFFEKIRESVAKDTLPQLTELVRNQNGKTQVDYSIAANTKVISKATMEKGFAAAAV.

The Zn(2+) site is built by C325, C327, C330, and H356.

Belongs to the queuine tRNA-ribosyltransferase family. QTRT2 subfamily. As to quaternary structure, heterodimer of a catalytic subunit and an accessory subunit. It depends on Zn(2+) as a cofactor.

It localises to the cytoplasm. Functionally, non-catalytic subunit of the queuine tRNA-ribosyltransferase (TGT) that catalyzes the base-exchange of a guanine (G) residue with queuine (Q) at position 34 (anticodon wobble position) in tRNAs with GU(N) anticodons (tRNA-Asp, -Asn, -His and -Tyr), resulting in the hypermodified nucleoside queuosine (7-(((4,5-cis-dihydroxy-2-cyclopenten-1-yl)amino)methyl)-7-deazaguanosine). This chain is Queuine tRNA-ribosyltransferase accessory subunit 2, found in Drosophila sechellia (Fruit fly).